The primary structure comprises 106 residues: EFRKSDIGSSLPQHFRWSQVGSQSIQLSWDDHKVNGHTPDQVHLFVIPRSSSLQRVEKQVAFSAKTVILEGLHGNTLYYVILTVSAGEEECSITSAQSELRSMCIK.

The 96-residue stretch at 11–106 (LPQHFRWSQV…QSELRSMCIK (96 aa)) folds into the Fibronectin type-III domain.

This is Oncosphere antigen B (ONCB) from Hydatigena taeniaeformis (Feline tapeworm).